Reading from the N-terminus, the 471-residue chain is V-type ATP synthase beta chain (471 aa).

Belongs to the ATPase alpha/beta chains family.

In terms of biological role, produces ATP from ADP in the presence of a proton gradient across the membrane. The V-type beta chain is a regulatory subunit. This Deinococcus radiodurans (strain ATCC 13939 / DSM 20539 / JCM 16871 / CCUG 27074 / LMG 4051 / NBRC 15346 / NCIMB 9279 / VKM B-1422 / R1) protein is V-type ATP synthase beta chain (atpB).